Here is a 50-residue protein sequence, read N- to C-terminus: U37-theraphotoxin-Cg1b (50 aa).

The first 19 residues, 1 to 19, serve as a signal peptide directing secretion; that stretch reads MRVLLIIAGLALLSVVCYT.

The protein belongs to the neurotoxin 10 (Hwtx-1) family. 67 (Jztx-67) subfamily. In terms of tissue distribution, expressed by the venom gland.

It is found in the secreted. This is U37-theraphotoxin-Cg1b from Chilobrachys guangxiensis (Chinese earth tiger tarantula).